Here is a 901-residue protein sequence, read N- to C-terminus: Disease resistance RPP8-like protein 3 (901 aa).

Residues 15 to 56 (ALLNRESERLNGIDEQVDGLKRQLRGLQSLLKDADAKKHGSD) adopt a coiled-coil conformation. The NB-ARC domain maps to 144 to 453 (LQDIQREIRQ…AEGIYDGLTI (310 aa)). ATP contacts are provided by residues 190 to 197 (GMGGIGKT) and 385 to 392 (GAQIVGKS). LRR repeat units lie at residues 567-591 (LPLLRVLDLSSVKFEGGKLPSSIGG), 592-615 (LIHLRFLSLHQAVVSHLPSTIRNL), and 833-858 (MPCLRDLIIHSCEKLEELPDGLKYVT).

The protein belongs to the disease resistance NB-LRR family. RPP8/HRT subfamily.

Functionally, disease resistance protein. The chain is Disease resistance RPP8-like protein 3 (RPP8L3) from Arabidopsis thaliana (Mouse-ear cress).